The primary structure comprises 1150 residues: Pesticidal crystal protein Cry9Ea (1150 aa).

Belongs to the delta endotoxin family.

Its function is as follows. Promotes colloidosmotic lysis by binding to the midgut epithelial cells of insects. The protein is Pesticidal crystal protein Cry9Ea (cry9Ea) of Bacillus thuringiensis subsp. aizawai.